The following is a 517-amino-acid chain: uncharacterized protein (517 aa).

Disordered stretches follow at residues 16–148 (KDES…TITK), 156–175 (VNKE…NTTT), and 216–351 (KLEK…EENE). The segment covering 48 to 75 (NNNNNNNNTTTTNNNTNNSNTSTSNNSK) has biased composition (low complexity). The span at 84 to 112 (FDDDDDDGDEEDEEEEDDDDDDDDDDDET) shows a compositional bias: acidic residues. Pro residues predominate over residues 127–143 (QPQPQPQPQPQPQPPIK). A compositionally biased stretch (polar residues) spans 236–252 (VSSTLSNSFDPNIIHNQ). Residues 254 to 266 (SPPPPPISIPIPL) show a composition bias toward pro residues. 2 stretches are compositionally biased toward low complexity: residues 271–320 (NLNN…NSNI) and 327–347 (SSSM…SNNN). A coiled-coil region spans residues 340-452 (DNSSSNNNEE…HQNQQNSMNN (113 aa)).

The protein belongs to the ENTR1 family.

This is an uncharacterized protein from Dictyostelium discoideum (Social amoeba).